The following is a 255-amino-acid chain: Thiazole synthase (255 aa).

Lys96 acts as the Schiff-base intermediate with DXP in catalysis. 1-deoxy-D-xylulose 5-phosphate-binding positions include Gly157, 183–184 (AG), and 205–206 (NT).

Belongs to the ThiG family. As to quaternary structure, homotetramer. Forms heterodimers with either ThiH or ThiS.

It is found in the cytoplasm. It catalyses the reaction [ThiS sulfur-carrier protein]-C-terminal-Gly-aminoethanethioate + 2-iminoacetate + 1-deoxy-D-xylulose 5-phosphate = [ThiS sulfur-carrier protein]-C-terminal Gly-Gly + 2-[(2R,5Z)-2-carboxy-4-methylthiazol-5(2H)-ylidene]ethyl phosphate + 2 H2O + H(+). Its pathway is cofactor biosynthesis; thiamine diphosphate biosynthesis. In terms of biological role, catalyzes the rearrangement of 1-deoxy-D-xylulose 5-phosphate (DXP) to produce the thiazole phosphate moiety of thiamine. Sulfur is provided by the thiocarboxylate moiety of the carrier protein ThiS. In vitro, sulfur can be provided by H(2)S. This Staphylococcus haemolyticus (strain JCSC1435) protein is Thiazole synthase.